The following is a 166-amino-acid chain: Ribosome maturation factor RimP (166 aa).

Belongs to the RimP family.

The protein localises to the cytoplasm. Functionally, required for maturation of 30S ribosomal subunits. The polypeptide is Ribosome maturation factor RimP (Psychrobacter sp. (strain PRwf-1)).